Here is a 201-residue protein sequence, read N- to C-terminus: MALKDRFDKIISYFDTDDVSENEVHEVQERTSVQRDSRAATAQEASQRSHMTNSAEEEMIGSRPRTSTYDPNRQERQRVQRDNAYQQATPRVQNKDSVRQQREQVTIALKYPRKYEDAQEIVDLLIVNECVLIDFQYMLDAQARRCLDYIDGASRVLYGSLQKVGSSMFLLTPANVMVDIEEMNIPKTGQETSFDFDMKRR.

Residues 27–38 (VQERTSVQRDSR) are compositionally biased toward basic and acidic residues. The interval 27 to 99 (VQERTSVQRD…PRVQNKDSVR (73 aa)) is disordered. The span at 43-54 (QEASQRSHMTNS) shows a compositional bias: polar residues. Residues 72–81 (NRQERQRVQR) are compositionally biased toward basic and acidic residues. Polar residues predominate over residues 83-92 (NAYQQATPRV).

This sequence belongs to the SepF family. As to quaternary structure, homodimer. Interacts with FtsZ.

It localises to the cytoplasm. In terms of biological role, cell division protein that is part of the divisome complex and is recruited early to the Z-ring. Probably stimulates Z-ring formation, perhaps through the cross-linking of FtsZ protofilaments. Its function overlaps with FtsA. This chain is Cell division protein SepF, found in Streptococcus agalactiae serotype Ia (strain ATCC 27591 / A909 / CDC SS700).